The primary structure comprises 149 residues: Transcriptional repressor NrdR (149 aa).

A zinc finger spans residues 3–34 (CPFCSENDTKVIDSRLVADGHQVRRRRQCLAC). Positions 49-139 (PKVIKSNGNR…VYRSFEDIRE (91 aa)) constitute an ATP-cone domain.

This sequence belongs to the NrdR family. It depends on Zn(2+) as a cofactor.

Functionally, negatively regulates transcription of bacterial ribonucleotide reductase nrd genes and operons by binding to NrdR-boxes. This Vibrio atlanticus (strain LGP32) (Vibrio splendidus (strain Mel32)) protein is Transcriptional repressor NrdR.